A 430-amino-acid chain; its full sequence is Enolase (430 aa).

(2R)-2-phosphoglycerate is bound at residue Gln165. The Proton donor role is filled by Glu207. The Mg(2+) site is built by Asp244, Glu287, and Asp314. Positions 339, 368, 369, and 390 each coordinate (2R)-2-phosphoglycerate. The active-site Proton acceptor is the Lys339.

The protein belongs to the enolase family. As to quaternary structure, component of the RNA degradosome, a multiprotein complex involved in RNA processing and mRNA degradation. The cofactor is Mg(2+).

Its subcellular location is the cytoplasm. The protein resides in the secreted. It is found in the cell surface. The catalysed reaction is (2R)-2-phosphoglycerate = phosphoenolpyruvate + H2O. Its pathway is carbohydrate degradation; glycolysis; pyruvate from D-glyceraldehyde 3-phosphate: step 4/5. Catalyzes the reversible conversion of 2-phosphoglycerate (2-PG) into phosphoenolpyruvate (PEP). It is essential for the degradation of carbohydrates via glycolysis. The polypeptide is Enolase (Stenotrophomonas maltophilia (strain K279a)).